The sequence spans 358 residues: G-protein coupled receptor 87 (358 aa).

The Extracellular segment spans residues 1–47 (MGLNLTLTKLPGNELYSQASHTANSTSEGHGKNSTLHNKFDTIILPV). 3 N-linked (GlcNAc...) asparagine glycosylation sites follow: N4, N24, and N33. The chain crosses the membrane as a helical span at residues 48 to 68 (LYLVIFVASILLNGLAVWIFF). The Cytoplasmic segment spans residues 69–75 (HIRNKTS). A helical membrane pass occupies residues 76–96 (FIFYLKNIVVADLIMTLTFPF). The Extracellular portion of the chain corresponds to 97–116 (RIVRDAGFGPWYFEFILCRY). Cysteines 114 and 192 form a disulfide. A helical transmembrane segment spans residues 117-137 (TSVLFYANMYTSIVFLGLISV). Topologically, residues 138–159 (DRYLKVVKPFGDSRMYSITFTK) are cytoplasmic. The chain crosses the membrane as a helical span at residues 160–180 (VLSVCVWVIMAILSLPNIILT). At 181 to 208 (NGQPTKENIHDCMKLKSPLGAKWHMAVT) the chain is on the extracellular side. A helical membrane pass occupies residues 209–229 (YVDSCLFVAVLVILIGCYIAI). At 230 to 256 (SRYIHKSSRQFISQSSRKRKHNQSIRV) the chain is on the cytoplasmic side. A helical membrane pass occupies residues 257-277 (VVAVFFTCFLPYHLCRIPFTF). Residues 278-297 (SNLDRLLDESAHKILYYCKE) are Extracellular-facing. A helical transmembrane segment spans residues 298–318 (MTLFLSACNVCLDPIIYFFMC). The Cytoplasmic segment spans residues 319 to 358 (KSFSRRLFKKSNIRTRSESIRSLQSVRRSEVRIYYDYTDV).

The protein belongs to the G-protein coupled receptor 1 family. As to expression, expressed at high levels in testis and brain and to a lesser extent placenta, ovary, prostate, and skeletal muscle but not in heart, lung, kidney, liver or intestine.

The protein resides in the cell membrane. In terms of biological role, receptor for lysophosphatidic acid (LPA). Necessary for p53/TP53-dependent survival in response to DNA damage. Promotes the Hippo-YAP signaling pathway and thereby modulates glycolysis and oxidative stress production by the regulation of hexokinase-2/HK2. The protein is G-protein coupled receptor 87 (Gpr87) of Mus musculus (Mouse).